A 417-amino-acid chain; its full sequence is Gamma-glutamyl phosphate reductase (417 aa).

This sequence belongs to the gamma-glutamyl phosphate reductase family.

The protein localises to the cytoplasm. The enzyme catalyses L-glutamate 5-semialdehyde + phosphate + NADP(+) = L-glutamyl 5-phosphate + NADPH + H(+). Its pathway is amino-acid biosynthesis; L-proline biosynthesis; L-glutamate 5-semialdehyde from L-glutamate: step 2/2. Functionally, catalyzes the NADPH-dependent reduction of L-glutamate 5-phosphate into L-glutamate 5-semialdehyde and phosphate. The product spontaneously undergoes cyclization to form 1-pyrroline-5-carboxylate. In Enterococcus faecalis (strain ATCC 700802 / V583), this protein is Gamma-glutamyl phosphate reductase.